Reading from the N-terminus, the 404-residue chain is Argininosuccinate synthase (404 aa).

ATP contacts are provided by residues 10–18 (AYSGGVDTS) and Ala-38. Residue Tyr-89 coordinates L-citrulline. Residue Gly-119 participates in ATP binding. Thr-121, Asn-125, and Asp-126 together coordinate L-aspartate. L-citrulline is bound at residue Asn-125. The L-citrulline site is built by Arg-129, Ser-177, Ser-186, Glu-262, and Tyr-274.

This sequence belongs to the argininosuccinate synthase family. Type 1 subfamily. As to quaternary structure, homotetramer.

It is found in the cytoplasm. It catalyses the reaction L-citrulline + L-aspartate + ATP = 2-(N(omega)-L-arginino)succinate + AMP + diphosphate + H(+). Its pathway is amino-acid biosynthesis; L-arginine biosynthesis; L-arginine from L-ornithine and carbamoyl phosphate: step 2/3. The sequence is that of Argininosuccinate synthase from Prochlorococcus marinus (strain MIT 9312).